The chain runs to 162 residues: MTKLTLYPGTFDPITNGHLDLIKRSASMFDHIIVAVAASPSKKTLFTLDERVQLVQAVTKDLPNVYVEGFSGLMVDFAKEKKANLLVRGLRTTMDFEYEFGLTSMYRKLMPELESVFLTPSEEYAFLSSTIVREVALHGGSVEAFVPSSVNQALKNKVASSL.

T10 is a substrate binding site. ATP is bound by residues 10 to 11 and H18; that span reads TF. Substrate-binding residues include K42, M74, and R88. Residues 89-91, E99, and 124-130 each bind ATP; these read GLR and YAFLSST.

The protein belongs to the bacterial CoaD family. Homohexamer. Requires Mg(2+) as cofactor.

The protein localises to the cytoplasm. The enzyme catalyses (R)-4'-phosphopantetheine + ATP + H(+) = 3'-dephospho-CoA + diphosphate. It participates in cofactor biosynthesis; coenzyme A biosynthesis; CoA from (R)-pantothenate: step 4/5. Functionally, reversibly transfers an adenylyl group from ATP to 4'-phosphopantetheine, yielding dephospho-CoA (dPCoA) and pyrophosphate. The polypeptide is Phosphopantetheine adenylyltransferase (Aliivibrio fischeri (strain ATCC 700601 / ES114) (Vibrio fischeri)).